Here is a 518-residue protein sequence, read N- to C-terminus: Integrator complex subunit 14 (518 aa).

Residues 2–204 (PTVVVMDVSL…KNVQSMFGKL (203 aa)) enclose the VWFA domain. 3 residues coordinate Mg(2+): Ser-10, Ser-12, and Thr-86. The residue at position 418 (Lys-418) is an N6-acetyllysine.

It belongs to the Integrator subunit 14 family. In terms of assembly, component of the Integrator complex, composed of core subunits INTS1, INTS2, INTS3, INTS4, INTS5, INTS6, INTS7, INTS8, INTS9/RC74, INTS10, INTS11/CPSF3L, INTS12, INTS13, INTS14 and INTS15. The core complex associates with protein phosphatase 2A subunits PPP2CA and PPP2R1A, to form the Integrator-PP2A (INTAC) complex. INTS14 is part of the tail subcomplex, composed of INTS10, INTS13, INTS14 and INTS15.

It is found in the nucleus. In terms of biological role, component of the integrator complex, a multiprotein complex that terminates RNA polymerase II (Pol II) transcription in the promoter-proximal region of genes. The integrator complex provides a quality checkpoint during transcription elongation by driving premature transcription termination of transcripts that are unfavorably configured for transcriptional elongation: the complex terminates transcription by (1) catalyzing dephosphorylation of the C-terminal domain (CTD) of Pol II subunit POLR2A/RPB1 and SUPT5H/SPT5, (2) degrading the exiting nascent RNA transcript via endonuclease activity and (3) promoting the release of Pol II from bound DNA. The integrator complex is also involved in terminating the synthesis of non-coding Pol II transcripts, such as enhancer RNAs (eRNAs), small nuclear RNAs (snRNAs), telomerase RNAs and long non-coding RNAs (lncRNAs). Within the integrator complex, INTS14 is part of the integrator tail module that acts as a platform for the recruitment of transcription factors at promoters. In Bos taurus (Bovine), this protein is Integrator complex subunit 14.